The chain runs to 198 residues: UPF0301 protein BDI_1431 (198 aa).

This sequence belongs to the UPF0301 (AlgH) family.

This is UPF0301 protein BDI_1431 from Parabacteroides distasonis (strain ATCC 8503 / DSM 20701 / CIP 104284 / JCM 5825 / NCTC 11152).